Consider the following 370-residue polypeptide: UDP-3-O-acylglucosamine N-acyltransferase (370 aa).

The active-site Proton acceptor is the His252. Positions 350–370 (AAGRQDGPAANAASSSAGDKA) are disordered. A compositionally biased stretch (low complexity) spans 358 to 370 (AANAASSSAGDKA).

It belongs to the transferase hexapeptide repeat family. LpxD subfamily. Homotrimer.

The catalysed reaction is a UDP-3-O-[(3R)-3-hydroxyacyl]-alpha-D-glucosamine + a (3R)-hydroxyacyl-[ACP] = a UDP-2-N,3-O-bis[(3R)-3-hydroxyacyl]-alpha-D-glucosamine + holo-[ACP] + H(+). It participates in bacterial outer membrane biogenesis; LPS lipid A biosynthesis. In terms of biological role, catalyzes the N-acylation of UDP-3-O-acylglucosamine using 3-hydroxyacyl-ACP as the acyl donor. Is involved in the biosynthesis of lipid A, a phosphorylated glycolipid that anchors the lipopolysaccharide to the outer membrane of the cell. This chain is UDP-3-O-acylglucosamine N-acyltransferase, found in Paraburkholderia xenovorans (strain LB400).